Consider the following 84-residue polypeptide: MSHKKAGGSTRNGRDSNAQRRGVKKFGGQTVVAGNILVRQLGTKIHPGSNVGMGKDYTLFSKIDGVVAYERKGRDKKRVSVYEA.

Positions 1–25 (MSHKKAGGSTRNGRDSNAQRRGVKK) are disordered.

It belongs to the bacterial ribosomal protein bL27 family.

This is Large ribosomal subunit protein bL27 from Desulforapulum autotrophicum (strain ATCC 43914 / DSM 3382 / VKM B-1955 / HRM2) (Desulfobacterium autotrophicum).